A 349-amino-acid polypeptide reads, in one-letter code: MTNEHSAPLTYRDAGVDIDAGDALVDRIKPLAARTMRPGVLAGIGGFGALFEVPKKYREPVLVSGTDGVGTKLRLAFDWNRHDTVGIDLVAMSVNDILVQGAEPLFFLDYFACGKLSVDTAAAVVGGIARGCELAGCALIGGETAEMPGMYPDGEYDLAGFAVGAVEKTAIIDGKSIQPGDVVLGLASSGAHSNGYSLVRKILERAGARPDQDFHGQPLVDVVMAPTRIYVKQVLAALAEHGTAIKGLAHITGGGLLDNVPRILQQGLSAKLYRDGWQMPQLFQWLQQQGAVADTEMYRVFNCGIGMVLVVAADQADAISATLRAQGEAVSRLGEIVPQQDGMAQTFVV.

It belongs to the AIR synthase family.

The protein localises to the cytoplasm. It catalyses the reaction 2-formamido-N(1)-(5-O-phospho-beta-D-ribosyl)acetamidine + ATP = 5-amino-1-(5-phospho-beta-D-ribosyl)imidazole + ADP + phosphate + H(+). The protein operates within purine metabolism; IMP biosynthesis via de novo pathway; 5-amino-1-(5-phospho-D-ribosyl)imidazole from N(2)-formyl-N(1)-(5-phospho-D-ribosyl)glycinamide: step 2/2. This is Phosphoribosylformylglycinamidine cyclo-ligase from Bordetella avium (strain 197N).